The following is a 201-amino-acid chain: Large ribosomal subunit protein uL4 (201 aa).

The disordered stretch occupies residues 45–71; sequence AQKTRAEVTGSGKKPWRQKGTGRARAG.

It belongs to the universal ribosomal protein uL4 family. Part of the 50S ribosomal subunit.

Its function is as follows. One of the primary rRNA binding proteins, this protein initially binds near the 5'-end of the 23S rRNA. It is important during the early stages of 50S assembly. It makes multiple contacts with different domains of the 23S rRNA in the assembled 50S subunit and ribosome. In terms of biological role, forms part of the polypeptide exit tunnel. This is Large ribosomal subunit protein uL4 from Shewanella loihica (strain ATCC BAA-1088 / PV-4).